An 882-amino-acid polypeptide reads, in one-letter code: HTH-type transcriptional regulator AlkS (882 aa).

51 to 58 (APPGYGKT) provides a ligand contact to ATP. Residues 815 to 880 (ENKADALLTR…QATIEAERQG (66 aa)) enclose the HTH luxR-type domain. The H-T-H motif DNA-binding region spans 839 to 858 (NKQIATNMHVTEDAIKWHMR).

Its pathway is hydrocarbon metabolism; alkane degradation. Functionally, this protein activates the expression of alkBFGHJKL operon in the presence of alkanes. This Ectopseudomonas oleovorans (Pseudomonas oleovorans) protein is HTH-type transcriptional regulator AlkS (alkS).